The following is a 157-amino-acid chain: Putative 4-hydroxy-4-methyl-2-oxoglutarate aldolase (157 aa).

Residues 78–81 (GDVI) and Arg100 each bind substrate. Residue Asp101 coordinates a divalent metal cation.

This sequence belongs to the class II aldolase/RraA-like family. Homotrimer. A divalent metal cation is required as a cofactor.

The enzyme catalyses 4-hydroxy-4-methyl-2-oxoglutarate = 2 pyruvate. It catalyses the reaction oxaloacetate + H(+) = pyruvate + CO2. Catalyzes the aldol cleavage of 4-hydroxy-4-methyl-2-oxoglutarate (HMG) into 2 molecules of pyruvate. Also contains a secondary oxaloacetate (OAA) decarboxylase activity due to the common pyruvate enolate transition state formed following C-C bond cleavage in the retro-aldol and decarboxylation reactions. The protein is Putative 4-hydroxy-4-methyl-2-oxoglutarate aldolase of Mycobacterium leprae (strain Br4923).